A 472-amino-acid chain; its full sequence is GTPase Der (472 aa).

EngA-type G domains follow at residues 3-166 and 176-349; these read PVIA…PEQE and IRIG…DSAM. GTP contacts are provided by residues 9-16, 56-60, 118-121, 182-189, 229-233, and 294-297; these read GRPNVGKS, DTGGI, NKID, DTAGV, and NKWD. The 85-residue stretch at 350–434 folds into the KH-like domain; that stretch reads AKWSTNQLTT…PIRFEFRSGE (85 aa). The tract at residues 433 to 472 is disordered; it reads GENPFAGKKNKLSPRQQKKKERLMKHVKKLKHKQKRKKSR. Positions 440 to 472 are enriched in basic residues; it reads KKNKLSPRQQKKKERLMKHVKKLKHKQKRKKSR.

This sequence belongs to the TRAFAC class TrmE-Era-EngA-EngB-Septin-like GTPase superfamily. EngA (Der) GTPase family. As to quaternary structure, associates with the 50S ribosomal subunit.

Functionally, GTPase that plays an essential role in the late steps of ribosome biogenesis. This Hahella chejuensis (strain KCTC 2396) protein is GTPase Der.